The chain runs to 207 residues: dTTP/UTP pyrophosphatase (207 aa).

The active-site Proton acceptor is D87.

This sequence belongs to the Maf family. YhdE subfamily. A divalent metal cation serves as cofactor.

The protein localises to the cytoplasm. The enzyme catalyses dTTP + H2O = dTMP + diphosphate + H(+). It carries out the reaction UTP + H2O = UMP + diphosphate + H(+). Nucleoside triphosphate pyrophosphatase that hydrolyzes dTTP and UTP. May have a dual role in cell division arrest and in preventing the incorporation of modified nucleotides into cellular nucleic acids. In Ralstonia nicotianae (strain ATCC BAA-1114 / GMI1000) (Ralstonia solanacearum), this protein is dTTP/UTP pyrophosphatase.